The chain runs to 416 residues: Cell division protein FtsZ (416 aa).

GTP is bound by residues 20–24 (GGGVN), 107–109 (GTG), E138, R142, and D186. The span at 319–335 (QETNANNSSPAQRQAES) shows a compositional bias: polar residues. The disordered stretch occupies residues 319 to 416 (QETNANNSSP…DSLDFPDFLK (98 aa)). Residues 376–392 (QDDDIPDDAGFDVDLPA) are compositionally biased toward acidic residues. The span at 404-416 (ARKDSLDFPDFLK) shows a compositional bias: basic and acidic residues.

This sequence belongs to the FtsZ family. Homodimer. Polymerizes to form a dynamic ring structure in a strictly GTP-dependent manner. Interacts directly with several other division proteins.

The protein resides in the cytoplasm. Functionally, essential cell division protein that forms a contractile ring structure (Z ring) at the future cell division site. The regulation of the ring assembly controls the timing and the location of cell division. One of the functions of the FtsZ ring is to recruit other cell division proteins to the septum to produce a new cell wall between the dividing cells. Binds GTP and shows GTPase activity. In Kocuria rhizophila (strain ATCC 9341 / DSM 348 / NBRC 103217 / DC2201), this protein is Cell division protein FtsZ.